The chain runs to 227 residues: UPF0688 protein C1orf174 homolog (227 aa).

Disordered stretches follow at residues Met-1–Leu-122 and Ala-207–Ile-227. Basic and acidic residues predominate over residues Thr-47–Val-63. 2 stretches are compositionally biased toward polar residues: residues Ala-77–Arg-104 and Arg-113–Leu-122.

The protein belongs to the UPF0688 family.

The protein localises to the nucleus. This Xenopus tropicalis (Western clawed frog) protein is UPF0688 protein C1orf174 homolog.